The following is a 246-amino-acid chain: U11/U12 small nuclear ribonucleoprotein 35 kDa protein (246 aa).

Residues L51–E129 form the RRM domain. A Glycyl lysine isopeptide (Lys-Gly) (interchain with G-Cter in SUMO2) cross-link involves residue K172. Residues S187–T217 form a disordered region. The span at R192–T217 shows a compositional bias: basic and acidic residues.

Component of the U11/U12 snRNPs that are part of the U12-type spliceosome. As to expression, expressed in heart, liver, skeletal muscle and pancreas.

The protein localises to the nucleus. The sequence is that of U11/U12 small nuclear ribonucleoprotein 35 kDa protein (SNRNP35) from Homo sapiens (Human).